Here is a 258-residue protein sequence, read N- to C-terminus: UPF0246 protein YPK_3600 (258 aa).

It belongs to the UPF0246 family.

The chain is UPF0246 protein YPK_3600 from Yersinia pseudotuberculosis serotype O:3 (strain YPIII).